The sequence spans 346 residues: 3 beta-hydroxysteroid dehydrogenase/Delta 5--&gt;4-isomerase (346 aa).

The Proton acceptor role is filled by tyrosine 147. Lysine 151 is a binding site for NAD(+).

It belongs to the 3-beta-HSD family.

The enzyme catalyses a 3beta-hydroxy-Delta(5)-steroid + NAD(+) = a 3-oxo-Delta(5)-steroid + NADH + H(+). It catalyses the reaction a 3-oxo-Delta(5)-steroid = a 3-oxo-Delta(4)-steroid. It participates in lipid metabolism; steroid biosynthesis. Catalyzes the oxidative conversion of Delta(5)-ene-3-beta-hydroxy steroid, and the oxidative conversion of ketosteroids. The 3-beta-HSD enzymatic system plays a crucial role in the biosynthesis of all classes of hormonal steroids. During viral infection, steroid production contributes to virulence by inhibiting the host inflammatory response. The protein is 3 beta-hydroxysteroid dehydrogenase/Delta 5--&gt;4-isomerase (OPG174) of Vaccinia virus (strain Western Reserve) (VACV).